Here is a 364-residue protein sequence, read N- to C-terminus: Dihydroorotate dehydrogenase (quinone) (364 aa).

Residues 62 to 66 and Thr86 each bind FMN; that span reads AGFDK. Substrate is bound at residue Lys66. 111–115 provides a ligand contact to substrate; sequence NRMGF. Residues Asn142 and Asn175 each coordinate FMN. Asn175 contacts substrate. Ser178 (nucleophile) is an active-site residue. Asn180 lines the substrate pocket. Positions 216 and 244 each coordinate FMN. Residue 245–246 participates in substrate binding; that stretch reads NT. FMN-binding positions include Gly267, Gly296, and 317 to 318; that span reads YT.

It belongs to the dihydroorotate dehydrogenase family. Type 2 subfamily. In terms of assembly, monomer. The cofactor is FMN.

Its subcellular location is the cell membrane. The enzyme catalyses (S)-dihydroorotate + a quinone = orotate + a quinol. It participates in pyrimidine metabolism; UMP biosynthesis via de novo pathway; orotate from (S)-dihydroorotate (quinone route): step 1/1. Its function is as follows. Catalyzes the conversion of dihydroorotate to orotate with quinone as electron acceptor. The chain is Dihydroorotate dehydrogenase (quinone) from Anaeromyxobacter sp. (strain K).